The chain runs to 1451 residues: Protein clueless (1451 aa).

Disordered regions lie at residues Met-1–Ala-101 and Lys-264–Pro-286. The segment covering Asn-9–Leu-53 has biased composition (low complexity). Residues Gly-66–Asn-75 show a composition bias toward basic residues. Phosphoserine is present on Ser-270. Residues Arg-424–Leu-666 form the Clu domain. 3 disordered regions span residues Ala-722–Thr-775, Ala-961–Ser-1012, and Ala-1413–Ser-1451. Basic and acidic residues predominate over residues Gly-748–Lys-758. Residues Lys-969–Lys-984 show a composition bias toward basic residues. Residues Gln-989 to Ser-1010 are compositionally biased toward low complexity.

The protein belongs to the CLU family.

The protein resides in the cytoplasm. Its function is as follows. mRNA-binding protein involved in proper cytoplasmic distribution of mitochondria. The sequence is that of Protein clueless from Drosophila yakuba (Fruit fly).